The sequence spans 136 residues: Piercer of microtubule wall 1 protein (136 aa).

Residues 1 to 24 (MAEECPRACAEPVAPKATAPPERT) are disordered.

It belongs to the PIERCE1 family. In terms of assembly, microtubule inner protein component of sperm flagellar doublet microtubules. Interacts with CFAP53, ODAD1 and ODAD3; the interactions link the outer dynein arms docking complex (ODA-DC) to the internal microtubule inner proteins (MIP) in cilium axoneme. Expressed in airway epithelial cells.

The protein resides in the cytoplasm. It localises to the cytoskeleton. Its subcellular location is the cilium axoneme. It is found in the flagellum axoneme. Its function is as follows. Microtubule inner protein involved in the attachment of outer dynein arms (ODAs) to dynein-decorated doublet microtubules (DMTs) in cilia axoneme, which is required for motile cilia beating. Functions at the initial step of left-right asymmetry specification of the visceral organs. This Homo sapiens (Human) protein is Piercer of microtubule wall 1 protein.